Reading from the N-terminus, the 242-residue chain is Uridylate kinase (242 aa).

12–15 (KLSG) is an ATP binding site. The interval 20–25 (GQKGYG) is involved in allosteric activation by GTP. G54 is a UMP binding site. ATP is bound by residues G55 and R59. UMP is bound by residues D74 and 135–142 (TGNPYFST). Q163, Y168, and D171 together coordinate ATP.

The protein belongs to the UMP kinase family. As to quaternary structure, homohexamer.

The protein localises to the cytoplasm. It carries out the reaction UMP + ATP = UDP + ADP. It functions in the pathway pyrimidine metabolism; CTP biosynthesis via de novo pathway; UDP from UMP (UMPK route): step 1/1. Allosterically activated by GTP. Inhibited by UTP. In terms of biological role, catalyzes the reversible phosphorylation of UMP to UDP. The chain is Uridylate kinase from Desulforamulus reducens (strain ATCC BAA-1160 / DSM 100696 / MI-1) (Desulfotomaculum reducens).